Reading from the N-terminus, the 143-residue chain is MRILGLDFGSKTVGVAVSDELLITAQGVEIVRRKSPSKLRQTLARIEEIIAEYKVDRIVLGYPKNMNNTEGERCEKTKEFGDMLARRTGLEVIYWDERLTTVAADRSMMETGIRRENRKEFVDEIAAIFILQGYLDYLSNSRS.

The protein belongs to the YqgF nuclease family.

The protein localises to the cytoplasm. Functionally, could be a nuclease involved in processing of the 5'-end of pre-16S rRNA. The sequence is that of Putative pre-16S rRNA nuclease from Agathobacter rectalis (strain ATCC 33656 / DSM 3377 / JCM 17463 / KCTC 5835 / VPI 0990) (Eubacterium rectale).